Here is a 76-residue protein sequence, read N- to C-terminus: Putative Fe(2+) transport protein A (76 aa).

This sequence belongs to the FeoA family.

In terms of biological role, might be involved in Fe(2+) ion uptake. This is Putative Fe(2+) transport protein A from Helicobacter pylori (strain ATCC 700392 / 26695) (Campylobacter pylori).